Consider the following 337-residue polypeptide: Primase homolog protein (337 aa).

The region spanning 205-304 (SEIIIVEGEP…WLVKWPKKSE (100 aa)) is the Toprim domain. Mg(2+) contacts are provided by E211, D273, and D275.

The cofactor is Mg(2+).

May act as a DNA primase. This is Primase homolog protein from Arabidopsis thaliana (Mouse-ear cress).